The chain runs to 258 residues: Indole-3-glycerol phosphate synthase (258 aa).

Belongs to the TrpC family.

The enzyme catalyses 1-(2-carboxyphenylamino)-1-deoxy-D-ribulose 5-phosphate + H(+) = (1S,2R)-1-C-(indol-3-yl)glycerol 3-phosphate + CO2 + H2O. It participates in amino-acid biosynthesis; L-tryptophan biosynthesis; L-tryptophan from chorismate: step 4/5. The protein is Indole-3-glycerol phosphate synthase of Campylobacter jejuni subsp. jejuni serotype O:23/36 (strain 81-176).